The chain runs to 1232 residues: Protein transport protein sec-16A.1 (1232 aa).

6 disordered regions span residues 18 to 134, 172 to 193, 815 to 843, 866 to 942, 972 to 1069, and 1140 to 1232; these read GASG…SGYA, RNGFVYDSGESDKTSEELEEDE, PVQESQQHVPQPQPVENKSISSEAKKWHD, KPIA…VVPE, QPIP…PQKQ, and PHLM…QNND. The span at 26–37 shows a compositional bias: polar residues; sequence DWNNPYNASPPS. Residues 67–76 are compositionally biased toward low complexity; that stretch reads RPILIQPARP. A compositionally biased stretch (polar residues) spans 78–100; it reads SQKSNRQGTGMSNGSRGLNSTFN. The span at 817-836 shows a compositional bias: polar residues; it reads QESQQHVPQPQPVENKSISS. Over residues 896-914 the composition is skewed to low complexity; that stretch reads SSVTVAASASRTSTLTSST. Polar residues-rich tracts occupy residues 1046–1060, 1149–1159, and 1168–1178; these read QQATLGQASIPNAKT, SNKSSTNSLRS, and YLQSGMATSQA. Residues 1194 to 1203 are compositionally biased toward low complexity; sequence PMSFSFMPAP. The segment covering 1222–1232 has biased composition (polar residues); sequence PSESLSKQNND.

It belongs to the SEC16 family. In terms of assembly, interacts with tfg-1 (via N-terminus); the interaction is direct and is required for both the localization of tfg-1 and to maintain the distribution of sec-16A.1 at endoplasmic reticulum exit sites (ERES).

The protein resides in the endoplasmic reticulum. The protein localises to the endoplasmic reticulum-Golgi intermediate compartment. Functionally, plays a role in the organization of the endoplasmic reticulum exit sites (ERES), also known as transitional endoplasmic reticulum (tER). In association with tfg-1, accumulates at ERES to positively regulate secretory cargo trafficking from the endoplasmic reticulum to the endoplasmic reticulum-Golgi intermediate compartment (ERGIC) and Golgi apparatus. This chain is Protein transport protein sec-16A.1, found in Caenorhabditis elegans.